The sequence spans 261 residues: Zinc finger protein 664 (261 aa).

9 C2H2-type zinc fingers span residues 3–25 (YKCPMCREFFSERADLFMHQKIH), 31–53 (HKCDKCDKGFFHISELHIHWRDH), 59–81 (YKCDDCGKDFSTTTKLNRHKKIH), 87–109 (YKCYECGKAFNWSSHLQIHMRVH), 115–137 (YVCSECGRGFSNSSNLCMHQRVH), 143–165 (FKCEECGKAFRHTSSLCMHQRVH), 171–193 (YKCYECGKAFSQSSSLCIHQRVH), 199–221 (YRCCGCGKAFSQSSSLCIHQRVH), and 227–249 (FKCDECGKAFSQSTSLCIHQRVH). A Glycyl lysine isopeptide (Lys-Gly) (interchain with G-Cter in SUMO2) cross-link involves residue Lys-257.

The protein belongs to the krueppel C2H2-type zinc-finger protein family.

The protein localises to the nucleus. Its function is as follows. May be involved in transcriptional regulation. The protein is Zinc finger protein 664 (ZNF664) of Pongo abelii (Sumatran orangutan).